Reading from the N-terminus, the 224-residue chain is UPF0758 protein VV1_0825 (224 aa).

A disordered region spans residues 1 to 20; it reads MSLKNLPSESMPREKLLQRG. The MPN domain maps to 102–224; it reads ALTSPQHTKL…VVSFAERGWI (123 aa). Residues His-173, His-175, and Asp-186 each contribute to the Zn(2+) site. The JAMM motif signature appears at 173-186; the sequence is HNHPSGVAEPSQAD.

This sequence belongs to the UPF0758 family.

This chain is UPF0758 protein VV1_0825, found in Vibrio vulnificus (strain CMCP6).